Reading from the N-terminus, the 326-residue chain is uncharacterized protein (326 aa).

The disordered stretch occupies residues 293 to 326 (HRNYDANHSTSGEEENSGSRSRIAELSQSTIHRR).

This is an uncharacterized protein from Oryza latifolia (Indian wild rice).